The primary structure comprises 184 residues: Photosystem I assembly protein Ycf4 (184 aa).

Transmembrane regions (helical) follow at residues Phe-22–Ser-42 and Ile-64–Ile-84.

It belongs to the Ycf4 family.

The protein localises to the plastid. It is found in the chloroplast thylakoid membrane. Seems to be required for the assembly of the photosystem I complex. The sequence is that of Photosystem I assembly protein Ycf4 from Huperzia lucidula (Shining clubmoss).